The sequence spans 56 residues: uncharacterized protein (56 aa).

This is an uncharacterized protein from Acheta domesticus (House cricket).